Reading from the N-terminus, the 327-residue chain is MLGPQVWSSVRQGLSRSLSRNVGVWASGEGKKVDIAGIYPPVTTPFTATAEVDYGKLEENLHKLGTFPFRGFVVQGSNGEFPFLTSSERLEVVSRVRQAMPKNRLLLAGSGCESTQATVEMTVSMAQVGADAAMVVTPCYYRGRMSSAALIHHYTKVADLSPIPVVLYSVPANTGLDLPVDAVVTLSQHPNIVGMKDSGGDVTRIGLIVHKTRKQDFQVLAGSAGFLMASYALGAVGGVCALANVLGAQVCQLERLCCTGQWEDAQKLQHRLIEPNAAVTRRFGIPGLKKIMDWFGYYGGPCRAPLQELSPAEEEALRMDFTSNGWL.

The transit peptide at M1 to W25 directs the protein to the mitochondrion. S77–N78 contributes to the substrate binding site. K196 acts as the Schiff-base intermediate with substrate in catalysis. Residues S198 and G222 each coordinate substrate.

Belongs to the DapA family. Homotetramer.

The protein resides in the mitochondrion. It catalyses the reaction (4S)-4-hydroxy-2-oxoglutarate = glyoxylate + pyruvate. The enzyme catalyses (4R)-4-hydroxy-2-oxoglutarate = glyoxylate + pyruvate. Inhibited by divalent cations. Its function is as follows. Catalyzes the final step in the metabolic pathway of hydroxyproline. This is 4-hydroxy-2-oxoglutarate aldolase, mitochondrial (HOGA1) from Homo sapiens (Human).